The primary structure comprises 127 residues: Glycine cleavage system H protein (127 aa).

The Lipoyl-binding domain occupies 22–104 (EAVIGITHFA…YTEGWMLRVK (83 aa)). At K63 the chain carries N6-lipoyllysine.

This sequence belongs to the GcvH family. In terms of assembly, the glycine cleavage system is composed of four proteins: P, T, L and H. (R)-lipoate serves as cofactor.

Functionally, the glycine cleavage system catalyzes the degradation of glycine. The H protein shuttles the methylamine group of glycine from the P protein to the T protein. The protein is Glycine cleavage system H protein of Nitratidesulfovibrio vulgaris (strain DP4) (Desulfovibrio vulgaris).